Here is a 299-residue protein sequence, read N- to C-terminus: Probable lipid kinase YegS (299 aa).

In terms of domain architecture, DAGKc spans Ala-2–Thr-133. ATP-binding positions include Thr-40, Gly-66–Glu-72, and Thr-95. 3 residues coordinate Mg(2+): Leu-215, Asp-218, and Leu-220. Residue Glu-271 is the Proton acceptor of the active site.

This sequence belongs to the diacylglycerol/lipid kinase family. YegS lipid kinase subfamily. It depends on Mg(2+) as a cofactor. The cofactor is Ca(2+).

The protein localises to the cytoplasm. Probably phosphorylates lipids; the in vivo substrate is unknown. The chain is Probable lipid kinase YegS from Salmonella choleraesuis (strain SC-B67).